Consider the following 86-residue polypeptide: Large ribosomal subunit protein bL31 (86 aa).

The segment at 65-86 (YGMASSDSSEQKDKSSEEKKES) is disordered. Residues 73–86 (SEQKDKSSEEKKES) show a composition bias toward basic and acidic residues.

It belongs to the bacterial ribosomal protein bL31 family. Type A subfamily. In terms of assembly, part of the 50S ribosomal subunit.

Binds the 23S rRNA. This is Large ribosomal subunit protein bL31 from Prochlorococcus marinus (strain NATL2A).